The chain runs to 141 residues: Large ribosomal subunit protein uL11 (141 aa).

The protein belongs to the universal ribosomal protein uL11 family. In terms of assembly, part of the ribosomal stalk of the 50S ribosomal subunit. Interacts with L10 and the large rRNA to form the base of the stalk. L10 forms an elongated spine to which L12 dimers bind in a sequential fashion forming a multimeric L10(L12)X complex. In terms of processing, one or more lysine residues are methylated.

In terms of biological role, forms part of the ribosomal stalk which helps the ribosome interact with GTP-bound translation factors. This Agathobacter rectalis (strain ATCC 33656 / DSM 3377 / JCM 17463 / KCTC 5835 / VPI 0990) (Eubacterium rectale) protein is Large ribosomal subunit protein uL11.